A 302-amino-acid polypeptide reads, in one-letter code: Bifunctional protein FolD (302 aa).

Residues 171-173, Ser-196, and Ile-237 contribute to the NADP(+) site; that span reads GRS.

It belongs to the tetrahydrofolate dehydrogenase/cyclohydrolase family. Homodimer.

It catalyses the reaction (6R)-5,10-methylene-5,6,7,8-tetrahydrofolate + NADP(+) = (6R)-5,10-methenyltetrahydrofolate + NADPH. It carries out the reaction (6R)-5,10-methenyltetrahydrofolate + H2O = (6R)-10-formyltetrahydrofolate + H(+). It participates in one-carbon metabolism; tetrahydrofolate interconversion. Functionally, catalyzes the oxidation of 5,10-methylenetetrahydrofolate to 5,10-methenyltetrahydrofolate and then the hydrolysis of 5,10-methenyltetrahydrofolate to 10-formyltetrahydrofolate. The sequence is that of Bifunctional protein FolD from Sphingopyxis alaskensis (strain DSM 13593 / LMG 18877 / RB2256) (Sphingomonas alaskensis).